The chain runs to 278 residues: Formamidopyrimidine-DNA glycosylase (278 aa).

P2 functions as the Schiff-base intermediate with DNA in the catalytic mechanism. E3 serves as the catalytic Proton donor. K59 functions as the Proton donor; for beta-elimination activity in the catalytic mechanism. Positions 93, 112, and 153 each coordinate DNA. The FPG-type zinc-finger motif lies at 238 to 272 (NVYDRAGEPCPRCQSTIERIVVAQRSTYFCPTCQI). The active-site Proton donor; for delta-elimination activity is R262.

Belongs to the FPG family. In terms of assembly, monomer. It depends on Zn(2+) as a cofactor.

The catalysed reaction is Hydrolysis of DNA containing ring-opened 7-methylguanine residues, releasing 2,6-diamino-4-hydroxy-5-(N-methyl)formamidopyrimidine.. It carries out the reaction 2'-deoxyribonucleotide-(2'-deoxyribose 5'-phosphate)-2'-deoxyribonucleotide-DNA = a 3'-end 2'-deoxyribonucleotide-(2,3-dehydro-2,3-deoxyribose 5'-phosphate)-DNA + a 5'-end 5'-phospho-2'-deoxyribonucleoside-DNA + H(+). Functionally, involved in base excision repair of DNA damaged by oxidation or by mutagenic agents. Acts as a DNA glycosylase that recognizes and removes damaged bases. Has a preference for oxidized purines, such as 7,8-dihydro-8-oxoguanine (8-oxoG). Has AP (apurinic/apyrimidinic) lyase activity and introduces nicks in the DNA strand. Cleaves the DNA backbone by beta-delta elimination to generate a single-strand break at the site of the removed base with both 3'- and 5'-phosphates. This is Formamidopyrimidine-DNA glycosylase from Chloroflexus aurantiacus (strain ATCC 29366 / DSM 635 / J-10-fl).